A 196-amino-acid polypeptide reads, in one-letter code: Calmodulin-like protein 4 (196 aa).

The segment at 1-43 (MAAEHLLPGPPPSLADFRLEAGGKGTERGSGSSKPTGSSRGPR) is disordered. Positions 17 to 27 (FRLEAGGKGTE) are enriched in basic and acidic residues. The segment covering 29-39 (GSGSSKPTGSS) has biased composition (polar residues). EF-hand domains follow at residues 51–86 (DQIN…LGAS), 87–122 (PTPG…QIKQ), 124–159 (DPKK…LGEK), and 160–195 (LTHK…PGRD).

The protein belongs to the calmodulin family. As to quaternary structure, interacts with MYO7B; the interaction mediates the association of CALML4 with the IMAC/intermicrovillar adhesion complex. Interacts with MYO7A. As to expression, expressed in the intestinal tract. Dominant transcript in the intestinal tract.

Its subcellular location is the cell projection. It is found in the microvillus. Functionally, as part of the intermicrovillar adhesion complex/IMAC plays a role in epithelial brush border differentiation, controlling microvilli organization and length. Acts as a light chain for MYO7B and is required for efficient targeting of the IMAC to the tips of border brush microvilli. This chain is Calmodulin-like protein 4, found in Homo sapiens (Human).